Here is a 397-residue protein sequence, read N- to C-terminus: P2X purinoceptor 3 (397 aa).

Over methionine 1–serine 20 the chain is Cytoplasmic. The helical transmembrane segment at tryptophan 21 to phenylalanine 43 threads the bilayer. Topologically, residues leucine 44–isoleucine 322 are extracellular. Residues lysine 63 and lysine 65 each coordinate ATP. Disulfide bonds link cysteine 107–cysteine 153, cysteine 116–cysteine 137, and cysteine 122–cysteine 147. Residue glutamate 111 participates in Mg(2+) binding. N-linked (GlcNAc...) asparagine glycosylation is present at asparagine 139. Position 158 (aspartate 158) interacts with Mg(2+). Aspartate 158 serves as a coordination point for Ca(2+). A glycan (N-linked (GlcNAc...) asparagine) is linked at asparagine 170. Residue threonine 172 coordinates ATP. Residue asparagine 194 is glycosylated (N-linked (GlcNAc...) asparagine). Cystine bridges form between cysteine 203–cysteine 213 and cysteine 247–cysteine 256. Positions 275, 279, and 281 each coordinate ATP. Residue asparagine 290 is glycosylated (N-linked (GlcNAc...) asparagine). Lysine 299 serves as a coordination point for ATP. A helical transmembrane segment spans residues isoleucine 323–isoleucine 341. Residues isoleucine 342 to histidine 397 lie on the Cytoplasmic side of the membrane. The segment covering serine 378 to glycine 391 has biased composition (polar residues). A disordered region spans residues serine 378–histidine 397.

This sequence belongs to the P2X receptor family. Homotrimer. Forms heterotrimer with P2RX2. Heterotrimeric P2RX2/3 has a ligand dose-response profile that is distinct from either homotrimeric P2RX2 or P2RX3.

It is found in the cell membrane. The catalysed reaction is Ca(2+)(in) = Ca(2+)(out). The enzyme catalyses Na(+)(in) = Na(+)(out). Has high sensitivity to ATP. Fast activation by external ATP. Exhibits rapid desensitization. Sensitives to the ATP agonist:alpha/beta-methylene-ATP. Subject to allosteric inhibition by AF-219. Mg(2+) and Ca(2+) slow deactivation of P2RX3. Its function is as follows. Extracellular ATP-activated non-selective cation channel. Plays particularly important role in sensory neurons where its activation is critical for gustatory, nociceptive responses, visceral reflexes and sensory hypersensitization. This Homo sapiens (Human) protein is P2X purinoceptor 3 (P2RX3).